The chain runs to 381 residues: N-acetyl-alpha-D-glucosaminyl L-malate synthase (381 aa).

The (S)-malate site is built by S16, Y94, and T122. Positions 206, 262, and 290 each coordinate UDP.

The protein belongs to the glycosyltransferase group 1 family. Glycosyltransferase 4 subfamily. In terms of assembly, dimer of tetramers.

The catalysed reaction is (S)-malate + UDP-N-acetyl-alpha-D-glucosamine = (S)-malyl N-acetyl-alpha-D-glucosaminide + UDP + H(+). Functionally, involved in bacillithiol (BSH) biosynthesis. Catalyzes the first step of the pathway, the formation of N-acetylglucosaminylmalate (GlcNAc-Mal) from UDP-N-acetylglucosamine (UDP-GlcNAc) and L-malate. In Bacillus anthracis, this protein is N-acetyl-alpha-D-glucosaminyl L-malate synthase.